Here is a 334-residue protein sequence, read N- to C-terminus: Cytochrome c551 peroxidase (334 aa).

A signal peptide spans 1 to 26 (MIKRTLTVSLLSLSLGAMFASAGVMA). The heme c site is built by cysteine 65, cysteine 68, histidine 69, cysteine 209, cysteine 212, histidine 213, histidine 270, and methionine 284. Residues 315-334 (FKLPILPPSNNDTPRSQPYE) are disordered. Polar residues predominate over residues 322 to 334 (PSNNDTPRSQPYE).

Post-translationally, binds 2 heme c groups covalently per subunit.

Its subcellular location is the periplasm. The enzyme catalyses 2 Fe(II)-[cytochrome c] + H2O2 + 2 H(+) = 2 Fe(III)-[cytochrome c] + 2 H2O. The protein is Cytochrome c551 peroxidase (ccp) of Nitrosomonas europaea (strain ATCC 19718 / CIP 103999 / KCTC 2705 / NBRC 14298).